Here is a 333-residue protein sequence, read N- to C-terminus: Protein RecA (333 aa).

Residue 69 to 76 (GPESSGKT) participates in ATP binding.

Belongs to the RecA family.

The protein localises to the cytoplasm. Its function is as follows. Can catalyze the hydrolysis of ATP in the presence of single-stranded DNA, the ATP-dependent uptake of single-stranded DNA by duplex DNA, and the ATP-dependent hybridization of homologous single-stranded DNAs. It interacts with LexA causing its activation and leading to its autocatalytic cleavage. The sequence is that of Protein RecA from Mesoplasma florum (strain ATCC 33453 / NBRC 100688 / NCTC 11704 / L1) (Acholeplasma florum).